We begin with the raw amino-acid sequence, 208 residues long: Cysteine-rich protein 2 (208 aa).

Residues 5 to 57 enclose the LIM zinc-binding 1 domain; it reads CPKCDKTVYFAEKVSSLGKDWHRFCLRCEHCSKTLTPGGHAEHDGKPFCHKPC. Position 23 is an N6-acetyllysine (Lys23). The tract at residues 98–117 is disordered; the sequence is TEERKASGPPKGPSKASSVT. A Phosphoserine modification is found at Ser104. Low complexity predominate over residues 104-115; the sequence is SGPPKGPSKASS. The region spanning 126–178 is the LIM zinc-binding 2 domain; it reads CPRCNKRVYFAEKVTSLGKDWHRPCLRCERCGKTLTPGGHAEHDGQPYCHKPC. 2 positions are modified to N6-acetyllysine: Lys138 and Lys144.

As to quaternary structure, interacts with TGFB1I1.

This chain is Cysteine-rich protein 2 (CRIP2), found in Bos taurus (Bovine).